Reading from the N-terminus, the 753-residue chain is Rsm22-cox11 tandem protein 1, mitochondrial (753 aa).

The transit peptide at 1-39 directs the protein to the mitochondrion; sequence MPILTCRYKILFLYNLRNCFTFQNQRCLIPYGTTTTIRW. [4Fe-4S] cluster-binding residues include Cys-323, Cys-329, Cys-342, and Cys-430. A helical transmembrane segment spans residues 571 to 591; that stretch reads IYYLVAISIFALGLTYAAVPL. Residues 592–753 lie on the Mitochondrial intermembrane side of the membrane; sequence YRLFCSKTGY…TNGNLLTKLN (162 aa).

In the N-terminal section; belongs to the methyltransferase superfamily. Rsm22 family. It in the C-terminal section; belongs to the COX11/CtaG family. Associates with the mitochondrial ribosome (mitoribosome). Only transiently interacts with the mitoribosome. Post-translationally, specific enzymatic cleavages in vivo by mitochondrial processing peptidase (MPP) yield mature proteins including rsm22-1 and cox11-1.

The protein resides in the mitochondrion. It localises to the mitochondrion inner membrane. In terms of biological role, mitochondrial ribosome (mitoribosome) assembly factor. Binds at the interface of the head and body domains of the mitochondrial small ribosomal subunit (mt-SSU), occluding the mRNA channel and preventing compaction of the head domain towards the body. Probable inactive methyltransferase: retains the characteristic folding and ability to bind S-adenosyl-L-methionine, but it probably lost its methyltransferase activity. Exerts its effect at some terminal stage of cytochrome c oxidase synthesis, probably by being involved in the insertion of the copper B into subunit I. This chain is Rsm22-cox11 tandem protein 1, mitochondrial (cox1101), found in Schizosaccharomyces pombe (strain 972 / ATCC 24843) (Fission yeast).